The chain runs to 253 residues: Cell division protein ZapD (253 aa).

The protein belongs to the ZapD family. In terms of assembly, interacts with FtsZ.

It is found in the cytoplasm. Functionally, cell division factor that enhances FtsZ-ring assembly. Directly interacts with FtsZ and promotes bundling of FtsZ protofilaments, with a reduction in FtsZ GTPase activity. In Bordetella bronchiseptica (strain ATCC BAA-588 / NCTC 13252 / RB50) (Alcaligenes bronchisepticus), this protein is Cell division protein ZapD.